The chain runs to 279 residues: Protein phosphatase 1 regulatory subunit 3E (279 aa).

Residues S16 and S33 each carry the phosphoserine modification. The interval 28-87 (RSQRPSLEEESEEEPGEGGTRPGARSRAHVPGRGRRARSAPAGGGGARTARSRSPDTRKR) is disordered. The segment covering 51-65 (ARSRAHVPGRGRRAR) has biased composition (basic residues). Residue S66 is modified to Phosphoserine. The PP1-binding motif motif lies at 87-90 (RVRF). The 106-residue stretch at 154–259 (AARLQAQRIC…NNGGRDYALL (106 aa)) folds into the CBM21 domain. Residues 176-198 (GSARVLDLAYEKRVSVRWSADGW) form a glycogen-binding motif region. The interval 248–256 (WDNNGGRDY) is substrate-binding motif.

In terms of biological role, acts as a glycogen-targeting subunit for PP1. PP1 is involved in glycogen metabolism and contributes to the activation of glycogen synthase leading to an increase in glycogen synthesis. In Mus musculus (Mouse), this protein is Protein phosphatase 1 regulatory subunit 3E (Ppp1r3e).